An 883-amino-acid chain; its full sequence is Collagen, type I, alpha 1b (883 aa).

The tract at residues 1 to 883 (QMSYVDHSKS…LGGSNDVELR (883 aa)) is disordered. Residues 13–33 (PPQPGPMGPMGPRGPPGPPGS) show a composition bias toward pro residues. 3 stretches are compositionally biased toward low complexity: residues 34–57 (SGPQ…AMGS), 113–122 (VPGVMGARGR), and 129–140 (SGARGNDGNTGP). Composition is skewed to gly residues over residues 147–161 (TGGE…GNEG) and 185–194 (GTDGGPGAKG). 3 stretches are compositionally biased toward low complexity: residues 195–205 (SPGAAGLAGAP), 214–223 (AQGAVGAPGP), and 230–248 (PGAS…PGPA). Residues 285–297 (GADGGAGGKGAPG) are compositionally biased toward gly residues. Composition is skewed to low complexity over residues 310–326 (ATGE…PGSK) and 390–402 (VGAP…AGPA). The segment covering 415 to 424 (GAPGLGGPTG) has biased composition (gly residues). Positions 425 to 444 (ARGAPGPAGNDGAKGEPGAA) are enriched in low complexity. 2 stretches are compositionally biased toward gly residues: residues 445 to 454 (GAPGGLGAPG) and 478 to 487 (GGKGGDGAPG). Residues 512 to 542 (AGPTGPRGETGPPGPAGFAGPPGADGQPGAK) are compositionally biased toward low complexity. Gly residues predominate over residues 564 to 573 (GPKGGAGPPG). Low complexity-rich tracts occupy residues 574-584 (ATGFPGPAGRV), 717-726 (APGAVGPSGK), and 742-756 (SGPA…PAGA). The span at 757–771 (KGDRGEAGEAGDRGH) shows a compositional bias: basic and acidic residues. The segment covering 792 to 812 (PAGASGPAGPRGPAGSNGAPG) has biased composition (low complexity). A compositionally biased stretch (pro residues) spans 821 to 836 (AGPPGPPGPAGPPGPP).

Belongs to the fibrillar collagen family.

The sequence is that of Collagen, type I, alpha 1b from Epinephelus costae (Goldblotch grouper).